Reading from the N-terminus, the 334-residue chain is Anthranilate phosphoribosyltransferase (334 aa).

5-phospho-alpha-D-ribose 1-diphosphate-binding positions include G81, 84–85 (GD), T89, 91–94 (NIST), 109–117 (KHGSRSVSS), and A121. G81 lines the anthranilate pocket. Residue S93 coordinates Mg(2+). R167 contributes to the anthranilate binding site. Mg(2+) contacts are provided by D225 and E226.

It belongs to the anthranilate phosphoribosyltransferase family. In terms of assembly, homodimer. Mg(2+) serves as cofactor.

It catalyses the reaction N-(5-phospho-beta-D-ribosyl)anthranilate + diphosphate = 5-phospho-alpha-D-ribose 1-diphosphate + anthranilate. Its pathway is amino-acid biosynthesis; L-tryptophan biosynthesis; L-tryptophan from chorismate: step 2/5. Catalyzes the transfer of the phosphoribosyl group of 5-phosphorylribose-1-pyrophosphate (PRPP) to anthranilate to yield N-(5'-phosphoribosyl)-anthranilate (PRA). The protein is Anthranilate phosphoribosyltransferase of Actinobacillus pleuropneumoniae serotype 7 (strain AP76).